A 402-amino-acid chain; its full sequence is Argininosuccinate synthase (402 aa).

Residues 11–19 and alanine 39 each bind ATP; that span reads AYSGGLDTS. Residues tyrosine 90 and serine 95 each contribute to the L-citrulline site. Glycine 120 contacts ATP. 3 residues coordinate L-aspartate: threonine 122, asparagine 126, and aspartate 127. Asparagine 126 is a binding site for L-citrulline. Residues arginine 130, serine 179, serine 188, glutamate 264, and tyrosine 276 each coordinate L-citrulline.

It belongs to the argininosuccinate synthase family. Type 1 subfamily. Homotetramer.

It is found in the cytoplasm. It carries out the reaction L-citrulline + L-aspartate + ATP = 2-(N(omega)-L-arginino)succinate + AMP + diphosphate + H(+). Its pathway is amino-acid biosynthesis; L-arginine biosynthesis; L-arginine from L-ornithine and carbamoyl phosphate: step 2/3. The polypeptide is Argininosuccinate synthase (Roseiflexus castenholzii (strain DSM 13941 / HLO8)).